Here is a 405-residue protein sequence, read N- to C-terminus: MKRTFILMLDSFGIGAASDADKFGDIGADTFGNIAKACAEGKANIGRDGSLKLPNLAKLGLGHAGFESTGQFAPGFSQDVEVVGAYGYADELSTGKDTPSGHWEMAGVPVLYDWGYFNDLQDSFPKELTDKILARAGLSGFLGNCHASGTTILEQLGEEHMRSGMPIFYTSADSVFQVACHEESFGLDNLLRLCEIAREELGPYNIGRVIARPFIGTGPSDFSRTGNRRDYAVEPPSKTVLDKLKDAGGEVVSVGKIADIYAHCGITKKVKASGLEALFDATLEQIKQAGDRTIVFTNFVDFDSHYGHRRDVAGYAKALEYFDERLPELLALLEQDDLLLLTADHGCDPTWPGSDHTRERVPVLALGAGLAAGSLGLRNSFADMGQSIASYFELEPMEYGESFIQ.

Residues Asp-10, Asp-303, His-308, Asp-344, His-345, and His-356 each coordinate Mn(2+).

It belongs to the phosphopentomutase family. Mn(2+) serves as cofactor.

Its subcellular location is the cytoplasm. The enzyme catalyses 2-deoxy-alpha-D-ribose 1-phosphate = 2-deoxy-D-ribose 5-phosphate. The catalysed reaction is alpha-D-ribose 1-phosphate = D-ribose 5-phosphate. Its pathway is carbohydrate degradation; 2-deoxy-D-ribose 1-phosphate degradation; D-glyceraldehyde 3-phosphate and acetaldehyde from 2-deoxy-alpha-D-ribose 1-phosphate: step 1/2. Isomerase that catalyzes the conversion of deoxy-ribose 1-phosphate (dRib-1-P) and ribose 1-phosphate (Rib-1-P) to deoxy-ribose 5-phosphate (dRib-5-P) and ribose 5-phosphate (Rib-5-P), respectively. The chain is Phosphopentomutase from Shewanella denitrificans (strain OS217 / ATCC BAA-1090 / DSM 15013).